The chain runs to 104 residues: Hydrogen cyanide synthase subunit HcnA (104 aa).

A 2Fe-2S ferredoxin-type domain is found at 16-97 (ADMTIHLNGQ…GMRVETESNR (82 aa)). Residues Cys60, Cys65, Cys68, and Cys81 each contribute to the [2Fe-2S] cluster site.

Heterotrimer of HcnA, HcnB and HcnC.

It localises to the cell membrane. It catalyses the reaction glycine + 2 A = hydrogen cyanide + 2 AH2 + CO2. Oxygen is necessary for cyanogenesis. Activated by succinate, glycine methyl ester, glucose and D,L-methionine in addition to glycine. Phenazine methosulfate, methylene blue, 2,6-dichlorophenolindophenol (DCIP) and ferricyanide can replace oxygen for the reaction. Inhibited by pyrrolnitrin and acriflavine at 1 mM concentration. In terms of biological role, a three-component membrane-bound flavoenzyme that catalyzes the formation of hydrogen cyanide, a secondary metabolite, by transfer of electrons to a cyanide-resistant branch of the aerobic respiratory chain. The chain is Hydrogen cyanide synthase subunit HcnA from Pseudomonas aeruginosa (strain ATCC 15692 / DSM 22644 / CIP 104116 / JCM 14847 / LMG 12228 / 1C / PRS 101 / PAO1).